A 189-amino-acid polypeptide reads, in one-letter code: UPF0301 protein PLES_04031 (189 aa).

The protein belongs to the UPF0301 (AlgH) family.

This is UPF0301 protein PLES_04031 from Pseudomonas aeruginosa (strain LESB58).